The following is a 230-amino-acid chain: 2,3-bisphosphoglycerate-dependent phosphoglycerate mutase (230 aa).

Residues 10-17, 23-24, Arg62, 89-92, Lys100, 116-117, and 185-186 each bind substrate; these read RHGQSKWN, TG, ERHY, RR, and GN. Residue His11 is the Tele-phosphohistidine intermediate of the active site. The active-site Proton donor/acceptor is the Glu89.

Belongs to the phosphoglycerate mutase family. BPG-dependent PGAM subfamily. In terms of assembly, homodimer.

The catalysed reaction is (2R)-2-phosphoglycerate = (2R)-3-phosphoglycerate. It functions in the pathway carbohydrate degradation; glycolysis; pyruvate from D-glyceraldehyde 3-phosphate: step 3/5. In terms of biological role, catalyzes the interconversion of 2-phosphoglycerate and 3-phosphoglycerate. This is 2,3-bisphosphoglycerate-dependent phosphoglycerate mutase from Buchnera aphidicola subsp. Schizaphis graminum (strain Sg).